An 89-amino-acid chain; its full sequence is Small ribosomal subunit protein bS16 (89 aa).

The protein belongs to the bacterial ribosomal protein bS16 family.

This chain is Small ribosomal subunit protein bS16, found in Chloroflexus aggregans (strain MD-66 / DSM 9485).